Here is a 304-residue protein sequence, read N- to C-terminus: UDP-3-O-acyl-N-acetylglucosamine deacetylase (304 aa).

3 residues coordinate Zn(2+): H78, H237, and D241. H264 serves as the catalytic Proton donor.

This sequence belongs to the LpxC family. Zn(2+) is required as a cofactor.

It catalyses the reaction a UDP-3-O-[(3R)-3-hydroxyacyl]-N-acetyl-alpha-D-glucosamine + H2O = a UDP-3-O-[(3R)-3-hydroxyacyl]-alpha-D-glucosamine + acetate. It participates in glycolipid biosynthesis; lipid IV(A) biosynthesis; lipid IV(A) from (3R)-3-hydroxytetradecanoyl-[acyl-carrier-protein] and UDP-N-acetyl-alpha-D-glucosamine: step 2/6. Its function is as follows. Catalyzes the hydrolysis of UDP-3-O-myristoyl-N-acetylglucosamine to form UDP-3-O-myristoylglucosamine and acetate, the committed step in lipid A biosynthesis. The protein is UDP-3-O-acyl-N-acetylglucosamine deacetylase of Legionella pneumophila (strain Paris).